The following is a 322-amino-acid chain: Acetyl-coenzyme A carboxylase carboxyl transferase subunit alpha (322 aa).

In terms of domain architecture, CoA carboxyltransferase C-terminal spans A30 to K293.

Belongs to the AccA family. Acetyl-CoA carboxylase is a heterohexamer composed of biotin carboxyl carrier protein (AccB), biotin carboxylase (AccC) and two subunits each of ACCase subunit alpha (AccA) and ACCase subunit beta (AccD).

It is found in the cytoplasm. The catalysed reaction is N(6)-carboxybiotinyl-L-lysyl-[protein] + acetyl-CoA = N(6)-biotinyl-L-lysyl-[protein] + malonyl-CoA. The protein operates within lipid metabolism; malonyl-CoA biosynthesis; malonyl-CoA from acetyl-CoA: step 1/1. Its function is as follows. Component of the acetyl coenzyme A carboxylase (ACC) complex. First, biotin carboxylase catalyzes the carboxylation of biotin on its carrier protein (BCCP) and then the CO(2) group is transferred by the carboxyltransferase to acetyl-CoA to form malonyl-CoA. In Nitrosomonas europaea (strain ATCC 19718 / CIP 103999 / KCTC 2705 / NBRC 14298), this protein is Acetyl-coenzyme A carboxylase carboxyl transferase subunit alpha.